We begin with the raw amino-acid sequence, 134 residues long: UPF0412 protein YaaI (134 aa).

Positions 1–23 (MRSVLTISAGLLFGLALSSVAHA) are cleaved as a signal peptide.

The protein belongs to the UPF0412 family.

This Salmonella agona (strain SL483) protein is UPF0412 protein YaaI.